Consider the following 166-residue polypeptide: Large ribosomal subunit protein uL10 (166 aa).

Belongs to the universal ribosomal protein uL10 family. In terms of assembly, part of the ribosomal stalk of the 50S ribosomal subunit. The N-terminus interacts with L11 and the large rRNA to form the base of the stalk. The C-terminus forms an elongated spine to which L12 dimers bind in a sequential fashion forming a multimeric L10(L12)X complex.

Functionally, forms part of the ribosomal stalk, playing a central role in the interaction of the ribosome with GTP-bound translation factors. This Pseudomonas syringae pv. tomato (strain ATCC BAA-871 / DC3000) protein is Large ribosomal subunit protein uL10.